We begin with the raw amino-acid sequence, 404 residues long: Phosphopentomutase (404 aa).

6 residues coordinate Mn(2+): D10, D297, H302, D338, H339, and H350.

The protein belongs to the phosphopentomutase family. The cofactor is Mn(2+).

Its subcellular location is the cytoplasm. It catalyses the reaction 2-deoxy-alpha-D-ribose 1-phosphate = 2-deoxy-D-ribose 5-phosphate. The enzyme catalyses alpha-D-ribose 1-phosphate = D-ribose 5-phosphate. The protein operates within carbohydrate degradation; 2-deoxy-D-ribose 1-phosphate degradation; D-glyceraldehyde 3-phosphate and acetaldehyde from 2-deoxy-alpha-D-ribose 1-phosphate: step 1/2. Its function is as follows. Isomerase that catalyzes the conversion of deoxy-ribose 1-phosphate (dRib-1-P) and ribose 1-phosphate (Rib-1-P) to deoxy-ribose 5-phosphate (dRib-5-P) and ribose 5-phosphate (Rib-5-P), respectively. The chain is Phosphopentomutase from Colwellia psychrerythraea (strain 34H / ATCC BAA-681) (Vibrio psychroerythus).